Here is a 227-residue protein sequence, read N- to C-terminus: MAHPVQLSLQDATSPVMEELITFHDHAFMAMSLISFLVLYALLSTLTTKLTNTSITDAQEMETIWTILPAIILILIALPSLRILYLTDEVNDPSFTIKSIGHQWYWTYEYTDYGGLIFNSYMLPPLFLNPGDLRLLEVDNRVVLPIEAPVRMMITSQDVLHSWTIPTLGLKTDAVPGRLNQTVFTATRPGVYYGQCSEICGANHSFMPIVAELIPLKIFEMGPVLTL.

Topologically, residues 1-14 (MAHPVQLSLQDATS) are mitochondrial intermembrane. The helical transmembrane segment at 15-45 (PVMEELITFHDHAFMAMSLISFLVLYALLST) threads the bilayer. At 46-59 (LTTKLTNTSITDAQ) the chain is on the mitochondrial matrix side. Residues 60–87 (EMETIWTILPAIILILIALPSLRILYLT) form a helical membrane-spanning segment. Residues 88–227 (DEVNDPSFTI…IFEMGPVLTL (140 aa)) are Mitochondrial intermembrane-facing. The Cu cation site is built by histidine 161, cysteine 196, glutamate 198, cysteine 200, histidine 204, and methionine 207. Position 198 (glutamate 198) interacts with Mg(2+).

Belongs to the cytochrome c oxidase subunit 2 family. As to quaternary structure, component of the cytochrome c oxidase (complex IV, CIV), a multisubunit enzyme composed of 14 subunits. The complex is composed of a catalytic core of 3 subunits MT-CO1, MT-CO2 and MT-CO3, encoded in the mitochondrial DNA, and 11 supernumerary subunits COX4I, COX5A, COX5B, COX6A, COX6B, COX6C, COX7A, COX7B, COX7C, COX8 and NDUFA4, which are encoded in the nuclear genome. The complex exists as a monomer or a dimer and forms supercomplexes (SCs) in the inner mitochondrial membrane with NADH-ubiquinone oxidoreductase (complex I, CI) and ubiquinol-cytochrome c oxidoreductase (cytochrome b-c1 complex, complex III, CIII), resulting in different assemblies (supercomplex SCI(1)III(2)IV(1) and megacomplex MCI(2)III(2)IV(2)). Found in a complex with TMEM177, COA6, COX18, COX20, SCO1 and SCO2. Interacts with TMEM177 in a COX20-dependent manner. Interacts with COX20. Interacts with COX16. The cofactor is Cu cation.

The protein resides in the mitochondrion inner membrane. It catalyses the reaction 4 Fe(II)-[cytochrome c] + O2 + 8 H(+)(in) = 4 Fe(III)-[cytochrome c] + 2 H2O + 4 H(+)(out). Functionally, component of the cytochrome c oxidase, the last enzyme in the mitochondrial electron transport chain which drives oxidative phosphorylation. The respiratory chain contains 3 multisubunit complexes succinate dehydrogenase (complex II, CII), ubiquinol-cytochrome c oxidoreductase (cytochrome b-c1 complex, complex III, CIII) and cytochrome c oxidase (complex IV, CIV), that cooperate to transfer electrons derived from NADH and succinate to molecular oxygen, creating an electrochemical gradient over the inner membrane that drives transmembrane transport and the ATP synthase. Cytochrome c oxidase is the component of the respiratory chain that catalyzes the reduction of oxygen to water. Electrons originating from reduced cytochrome c in the intermembrane space (IMS) are transferred via the dinuclear copper A center (CU(A)) of subunit 2 and heme A of subunit 1 to the active site in subunit 1, a binuclear center (BNC) formed by heme A3 and copper B (CU(B)). The BNC reduces molecular oxygen to 2 water molecules using 4 electrons from cytochrome c in the IMS and 4 protons from the mitochondrial matrix. In Macaca mulatta (Rhesus macaque), this protein is Cytochrome c oxidase subunit 2 (MT-CO2).